The primary structure comprises 513 residues: Nitrogenase molybdenum-iron protein beta chain (513 aa).

[8Fe-7S] cluster is bound by residues Cys70, Cys95, and Cys153.

This sequence belongs to the NifD/NifK/NifE/NifN family. In terms of assembly, tetramer of two alpha and two beta chains. Forms complex with the iron protein (nitrogenase component 2). It depends on [8Fe-7S] cluster as a cofactor.

It catalyses the reaction N2 + 8 reduced [2Fe-2S]-[ferredoxin] + 16 ATP + 16 H2O = H2 + 8 oxidized [2Fe-2S]-[ferredoxin] + 2 NH4(+) + 16 ADP + 16 phosphate + 6 H(+). Functionally, this molybdenum-iron protein is part of the nitrogenase complex that catalyzes the key enzymatic reactions in nitrogen fixation. This chain is Nitrogenase molybdenum-iron protein beta chain (nifK1), found in Sinorhizobium fredii (strain NBRC 101917 / NGR234).